A 605-amino-acid polypeptide reads, in one-letter code: Xylan O-acetyltransferase 7 (605 aa).

Over 1 to 124 (MKKKKNGMGA…AKQPSPRRTP (124 aa)) the chain is Cytoplasmic. Residues 86 to 126 (PCHLLPIQGQGQMQMQQRRKPPPAAAPVAAKQPSPRRTPGP) form a disordered region. The chain crosses the membrane as a helical; Signal-anchor for type II membrane protein span at residues 125–145 (GPLSFAGALLSLLVVATFLYI). The Lumenal segment spans residues 146-605 (NDHGNMMPPH…LYAHIVAHAA (460 aa)). N-linked (GlcNAc...) asparagine glycans are attached at residues N192 and N218. 4 disulfide bridges follow: C243–C296, C267–C332, C276–C584, and C499–C580. The short motif at 319 to 321 (GDS) is the GDS motif element. The Nucleophile role is filled by S321. N-linked (GlcNAc...) asparagine glycosylation is found at N351, N363, N471, and N508. The Proton donor role is filled by D579. The DXXH motif motif lies at 579-582 (DCIH). The active-site Proton acceptor is H582.

The protein belongs to the PC-esterase family. TBL subfamily. Expressed in roots, leaves and stems.

Its subcellular location is the golgi apparatus membrane. Xylan acetyltransferase required for 2-O- and 3-O-monoacetylation of xylosyl residues in xylan. Catalyzes the 2-O-acetylation of xylan, followed by nonenzymatic acetyl migration to the O-3 position, resulting in products that are monoacetylated at both O-2 and O-3 positions. This Oryza sativa subsp. japonica (Rice) protein is Xylan O-acetyltransferase 7.